The following is a 71-amino-acid chain: UPF0337 protein PPA1427 (71 aa).

A disordered region spans residues 20-46 (EKIGGLTDDSDLKSAGADQKASGKVAQ).

This sequence belongs to the UPF0337 (CsbD) family.

The polypeptide is UPF0337 protein PPA1427 (Cutibacterium acnes (strain DSM 16379 / KPA171202) (Propionibacterium acnes)).